Here is an 860-residue protein sequence, read N- to C-terminus: Leucine--tRNA ligase (860 aa).

Positions proline 42–histidine 52 match the 'HIGH' region motif. The short motif at lysine 619–serine 623 is the 'KMSKS' region element. Lysine 622 provides a ligand contact to ATP.

It belongs to the class-I aminoacyl-tRNA synthetase family.

Its subcellular location is the cytoplasm. The catalysed reaction is tRNA(Leu) + L-leucine + ATP = L-leucyl-tRNA(Leu) + AMP + diphosphate. The polypeptide is Leucine--tRNA ligase (Escherichia coli O81 (strain ED1a)).